Reading from the N-terminus, the 431-residue chain is Fumarylacetoacetase (431 aa).

Aspartate 133 contributes to the Ca(2+) binding site. Position 135 (tyrosine 135) interacts with substrate. Histidine 140 acts as the Proton acceptor in catalysis. Residue arginine 149 coordinates substrate. Ca(2+)-binding residues include glutamate 209, glutamate 211, and aspartate 243. Aspartate 243 lines the Mg(2+) pocket. Substrate is bound by residues glutamine 250 and tyrosine 254. 2 residues coordinate Mg(2+): lysine 263 and threonine 267. Position 362 (threonine 362) interacts with substrate.

Belongs to the FAH family. The cofactor is Ca(2+). Requires Mg(2+) as cofactor.

The catalysed reaction is 4-fumarylacetoacetate + H2O = acetoacetate + fumarate + H(+). It functions in the pathway amino-acid degradation; L-phenylalanine degradation; acetoacetate and fumarate from L-phenylalanine: step 6/6. In terms of biological role, use of phenylalanine and phenylacetate as a carbon source. This is Fumarylacetoacetase (fahA) from Emericella nidulans (strain FGSC A4 / ATCC 38163 / CBS 112.46 / NRRL 194 / M139) (Aspergillus nidulans).